We begin with the raw amino-acid sequence, 127 residues long: Cyclin-dependent kinase 2-associated protein 2 (127 aa).

The interval 1–47 is disordered; sequence MSYKPIAPAPSSTPGSSTPGPGTPVPTAGSVPSPSGSVPGAAAPFRP. Positions 9–44 are enriched in low complexity; sequence APSSTPGSSTPGPGTPVPTAGSVPSPSGSVPGAAAP. The interval 65 to 107 is interaction with CDK2; the sequence is PPGSQGSQSTYTDLLSVIEEMGKEIRPTYAGSKSAMERLKRGI.

Belongs to the CDK2AP family. Component of the nucleosome remodeling and deacetylase (NuRD) repressor complex, composed of core proteins MTA1, MTA2, MTA3, RBBP4, RBBP7, HDAC1, HDAC2, MBD2, MBD3, and peripherally associated proteins CDK2AP1, CDK2AP2, GATAD2A, GATAD2B, CHD3, CHD4 and CHD5. The exact stoichiometry of the NuRD complex is unknown, and some subunits such as MBD2 and MBD3, GATAD2A and GATAD2B, and CHD3, CHD4 and CHD5 define mutually exclusive NuRD complexes. Interacts with CDK2AP1. Interacts with CDK2. Interacts with MAPK1. Post-translationally, phosphorylated by MAPK1 and CDK2. Oocytes (at protein level).

The protein resides in the cytoplasm. The protein localises to the nucleus. In terms of biological role, acts as a component of the histone deacetylase NuRD complex which participates in the remodeling of chromatin. Inhibits cell cycle G1/S phase transition by repressing CDK2 expression and activation; represses CDK2 activation by inhibiting its interaction with cyclin E and A. Plays a role in regulating the self-renewal of embryonic stem cells (ESCs) and in maintaining cell survival during terminal differentiation of ESCs. Regulates microtubule organization of metaphase II oocytes. The sequence is that of Cyclin-dependent kinase 2-associated protein 2 (Cdk2ap2) from Mus musculus (Mouse).